The primary structure comprises 223 residues: Putative PAN domain-containing protein R486 (223 aa).

The first 23 residues, 1–23 (MSQTAIIIWIVVIIILLVLGGLG), serve as a signal peptide directing secretion. The interval 39–73 (PTPINPPSSITPIQPINPPSSITPIQPSGPPSGGN) is disordered. Low complexity predominate over residues 45-64 (PSSITPIQPINPPSSITPIQ). PAN domains are found at residues 80-155 (CPAY…EDGC) and 159-223 (ARYN…KMPH). Cystine bridges form between C80-C155 and C109-C131. 3 N-linked (GlcNAc...) asparagine; by host glycosylation sites follow: N162, N189, and N213. The cysteines at positions 182 and 204 are disulfide-linked.

The protein resides in the secreted. The protein localises to the virion. The chain is Putative PAN domain-containing protein R486 from Acanthamoeba polyphaga mimivirus (APMV).